Here is an 894-residue protein sequence, read N- to C-terminus: Sorting nexin-14 (894 aa).

In terms of domain architecture, PXA spans serine 78–proline 252. Residues glutamate 284–leucine 416 form the RGS domain. A Phosphoserine modification is found at serine 496. The 121-residue stretch at proline 518–threonine 638 folds into the PX domain.

Belongs to the sorting nexin family.

Its subcellular location is the cytoplasm. The protein localises to the cell projection. It localises to the dendrite. Plays a role in maintaining normal neuronal excitability and synaptic transmission. May be involved in several stages of intracellular trafficking. This chain is Sorting nexin-14 (SNX14), found in Pongo abelii (Sumatran orangutan).